Here is a 437-residue protein sequence, read N- to C-terminus: Elongation factor 1-gamma (437 aa).

A2 is subject to N-acetylalanine. One can recognise a GST N-terminal domain in the interval 2–87 (AAGTLYTYPE…YVSNEELRGS (86 aa)). One can recognise a GST C-terminal domain in the interval 88-216 (TPEAAAQVVQ…VKLCEKMAQF (129 aa)). N6-acetyllysine occurs at positions 147 and 212. Over residues 221–254 (FAESQPKKDTPRKEKGSREEKQKPQAERKEEKKA) the composition is skewed to basic and acidic residues. The tract at residues 221–268 (FAESQPKKDTPRKEKGSREEKQKPQAERKEEKKAAAPAPEEEMDECEQ) is disordered. A Glycyl lysine isopeptide (Lys-Gly) (interchain with G-Cter in SUMO1) cross-link involves residue K253. One can recognise an EF-1-gamma C-terminal domain in the interval 276 to 437 (AKDPFAHLPK…KAVNQGKIFK (162 aa)). Residue K285 forms a Glycyl lysine isopeptide (Lys-Gly) (interchain with G-Cter in SUMO2) linkage. N6-acetyllysine is present on K401. K434 is subject to N6-acetyllysine; alternate. Residue K434 is modified to N6-malonyllysine; alternate.

EF-1 is composed of four subunits: alpha, beta, delta, and gamma.

In terms of biological role, probably plays a role in anchoring the complex to other cellular components. The chain is Elongation factor 1-gamma (Eef1g) from Mus musculus (Mouse).